We begin with the raw amino-acid sequence, 169 residues long: Putative glycine cleavage system H protein, mitochondrial (169 aa).

The region spanning 60-142 is the Lipoyl-binding domain; sequence VGTVGITSYA…EEEGWICKIK (83 aa). K101 is subject to N6-lipoyllysine. S131 carries the phosphoserine modification.

The protein belongs to the GcvH family. In terms of assembly, component of the glycine decarboxylase complex (GDC), which is composed of four proteins: P, T, L and H. It depends on (R)-lipoate as a cofactor.

It localises to the mitochondrion. The glycine cleavage system (glycine decarboxylase complex) catalyzes the degradation of glycine. The H protein shuttles the methylamine group of glycine from the P protein to the T protein. The sequence is that of Putative glycine cleavage system H protein, mitochondrial (gcv3) from Schizosaccharomyces pombe (strain 972 / ATCC 24843) (Fission yeast).